Here is a 105-residue protein sequence, read N- to C-terminus: Thiosulfate sulfurtransferase GlpE (105 aa).

In terms of domain architecture, Rhodanese spans 15–103 (MQQGAILVDI…WCRAELPIDT (89 aa)). The active-site Cysteine persulfide intermediate is Cys-63.

Belongs to the GlpE family.

The protein resides in the cytoplasm. The catalysed reaction is thiosulfate + hydrogen cyanide = thiocyanate + sulfite + 2 H(+). It catalyses the reaction thiosulfate + [thioredoxin]-dithiol = [thioredoxin]-disulfide + hydrogen sulfide + sulfite + 2 H(+). Transferase that catalyzes the transfer of sulfur from thiosulfate to thiophilic acceptors such as cyanide or dithiols. May function in a CysM-independent thiosulfate assimilation pathway by catalyzing the conversion of thiosulfate to sulfite, which can then be used for L-cysteine biosynthesis. This is Thiosulfate sulfurtransferase GlpE from Haemophilus influenzae (strain PittEE).